The following is a 215-amino-acid chain: Orotate phosphoribosyltransferase (215 aa).

A 5-phospho-alpha-D-ribose 1-diphosphate-binding site is contributed by K26. An orotate-binding site is contributed by 34 to 35; it reads FF. 5-phospho-alpha-D-ribose 1-diphosphate is bound by residues 72-73, R99, K100, K103, H105, and 124-132; these read YK and DDVITAGTA. 2 residues coordinate orotate: T128 and R156.

The protein belongs to the purine/pyrimidine phosphoribosyltransferase family. PyrE subfamily. In terms of assembly, homodimer. Mg(2+) is required as a cofactor.

It catalyses the reaction orotidine 5'-phosphate + diphosphate = orotate + 5-phospho-alpha-D-ribose 1-diphosphate. It functions in the pathway pyrimidine metabolism; UMP biosynthesis via de novo pathway; UMP from orotate: step 1/2. Its function is as follows. Catalyzes the transfer of a ribosyl phosphate group from 5-phosphoribose 1-diphosphate to orotate, leading to the formation of orotidine monophosphate (OMP). This is Orotate phosphoribosyltransferase from Stutzerimonas stutzeri (strain A1501) (Pseudomonas stutzeri).